Here is a 38-residue protein sequence, read N- to C-terminus: Large ribosomal subunit protein bL36 (38 aa).

It belongs to the bacterial ribosomal protein bL36 family.

In Prosthecochloris aestuarii (strain DSM 271 / SK 413), this protein is Large ribosomal subunit protein bL36.